Here is a 339-residue protein sequence, read N- to C-terminus: DNA-directed RNA polymerase subunit alpha (339 aa).

Positions 1 to 233 (MVREEVAGST…DLFLPFLHAE (233 aa)) are alpha N-terminal domain (alpha-NTD). Positions 266–339 (GIPLNCIFID…IDLLKNKLSF (74 aa)) are alpha C-terminal domain (alpha-CTD).

Belongs to the RNA polymerase alpha chain family. In plastids the minimal PEP RNA polymerase catalytic core is composed of four subunits: alpha, beta, beta', and beta''. When a (nuclear-encoded) sigma factor is associated with the core the holoenzyme is formed, which can initiate transcription.

It localises to the plastid. Its subcellular location is the chloroplast. The enzyme catalyses RNA(n) + a ribonucleoside 5'-triphosphate = RNA(n+1) + diphosphate. DNA-dependent RNA polymerase catalyzes the transcription of DNA into RNA using the four ribonucleoside triphosphates as substrates. This chain is DNA-directed RNA polymerase subunit alpha, found in Elymus canadensis (Canada wild rye).